The chain runs to 321 residues: Cytochrome f (321 aa).

The first 35 residues, 1–35 (MQNRKTYDDWVKKWITQSISVLIMIDIMTRTSIAN), serve as a signal peptide directing secretion. Positions 37, 57, 60, and 61 each coordinate heme. Residues 287–307 (VQGLLLFLASVVLAQIFLVLK) form a helical membrane-spanning segment.

The protein belongs to the cytochrome f family. The 4 large subunits of the cytochrome b6-f complex are cytochrome b6, subunit IV (17 kDa polypeptide, petD), cytochrome f and the Rieske protein, while the 4 small subunits are PetG, PetL, PetM and PetN. The complex functions as a dimer. Heme is required as a cofactor.

It is found in the plastid. The protein localises to the chloroplast thylakoid membrane. Its function is as follows. Component of the cytochrome b6-f complex, which mediates electron transfer between photosystem II (PSII) and photosystem I (PSI), cyclic electron flow around PSI, and state transitions. In Cryptomeria japonica (Japanese cedar), this protein is Cytochrome f.